Reading from the N-terminus, the 124-residue chain is Glycine cleavage system H protein (124 aa).

A Lipoyl-binding domain is found at 22–104 (LIVTGISDHA…YGKGWIYKMK (83 aa)). The residue at position 63 (Lys63) is an N6-lipoyllysine.

Belongs to the GcvH family. The glycine cleavage system is composed of four proteins: P, T, L and H. Requires (R)-lipoate as cofactor.

The glycine cleavage system catalyzes the degradation of glycine. The H protein shuttles the methylamine group of glycine from the P protein to the T protein. This chain is Glycine cleavage system H protein, found in Acinetobacter baylyi (strain ATCC 33305 / BD413 / ADP1).